The following is a 266-amino-acid chain: Acetyl esterase (266 aa).

The chain is Acetyl esterase (xynC) from Caldicellulosiruptor saccharolyticus (Caldocellum saccharolyticum).